A 59-amino-acid polypeptide reads, in one-letter code: Photosystem II reaction center protein K (59 aa).

Residues 1–22 (MLNIFSLICLNSALYPSSLFFA) constitute a propeptide that is removed on maturation. Residues 38–58 (MPVIPLFFFLLAFVWQAAVSF) form a helical membrane-spanning segment.

The protein belongs to the PsbK family. PSII is composed of 1 copy each of membrane proteins PsbA, PsbB, PsbC, PsbD, PsbE, PsbF, PsbH, PsbI, PsbJ, PsbK, PsbL, PsbM, PsbT, PsbX, PsbY, PsbZ, Psb30/Ycf12, at least 3 peripheral proteins of the oxygen-evolving complex and a large number of cofactors. It forms dimeric complexes.

It localises to the plastid. The protein resides in the chloroplast thylakoid membrane. One of the components of the core complex of photosystem II (PSII). PSII is a light-driven water:plastoquinone oxidoreductase that uses light energy to abstract electrons from H(2)O, generating O(2) and a proton gradient subsequently used for ATP formation. It consists of a core antenna complex that captures photons, and an electron transfer chain that converts photonic excitation into a charge separation. This Lactuca sativa (Garden lettuce) protein is Photosystem II reaction center protein K.